Reading from the N-terminus, the 331-residue chain is Inositol 2-dehydrogenase (331 aa).

This sequence belongs to the Gfo/Idh/MocA family. In terms of assembly, homotetramer.

It carries out the reaction myo-inositol + NAD(+) = scyllo-inosose + NADH + H(+). Its function is as follows. Involved in the oxidation of myo-inositol (MI) to 2-keto-myo-inositol (2KMI or 2-inosose). The polypeptide is Inositol 2-dehydrogenase (Renibacterium salmoninarum (strain ATCC 33209 / DSM 20767 / JCM 11484 / NBRC 15589 / NCIMB 2235)).